We begin with the raw amino-acid sequence, 289 residues long: F-actin-capping protein subunit beta (289 aa).

The tract at residues R73–M110 is disordered. Residues G87 to A106 are compositionally biased toward gly residues.

It belongs to the F-actin-capping protein beta subunit family. As to quaternary structure, component of the F-actin capping complex, composed of a heterodimer of an alpha and a beta subunit.

Its subcellular location is the cytoplasm. The protein resides in the cytoskeleton. It is found in the actin patch. F-actin-capping proteins bind in a Ca(2+)-independent manner to the fast growing ends of actin filaments (barbed end) thereby blocking the exchange of subunits at these ends. Unlike other capping proteins (such as gelsolin and severin), these proteins do not sever actin filaments. The protein is F-actin-capping protein subunit beta (fac-2) of Neurospora crassa (strain ATCC 24698 / 74-OR23-1A / CBS 708.71 / DSM 1257 / FGSC 987).